The chain runs to 227 residues: Cytochrome c oxidase subunit 2 (227 aa).

The Mitochondrial intermembrane portion of the chain corresponds to 1-14 (MAYPFQLGLQDATS). The chain crosses the membrane as a helical span at residues 15-45 (PIMEELTNFHDHTLMIVFLISSLVLYIISLM). The Mitochondrial matrix segment spans residues 46–59 (LTTKLTHTSTMDAQ). The helical transmembrane segment at 60–87 (EVETIWTILPAVILILIALPSLRILYMM) threads the bilayer. Residues 88–227 (DEINNPALTV…YFENWSASMI (140 aa)) are Mitochondrial intermembrane-facing. Cu cation-binding residues include His-161, Cys-196, Glu-198, Cys-200, His-204, and Met-207. Mg(2+) is bound at residue Glu-198. Phosphotyrosine is present on Tyr-218.

Belongs to the cytochrome c oxidase subunit 2 family. Component of the cytochrome c oxidase (complex IV, CIV), a multisubunit enzyme composed of 14 subunits. The complex is composed of a catalytic core of 3 subunits MT-CO1, MT-CO2 and MT-CO3, encoded in the mitochondrial DNA, and 11 supernumerary subunits COX4I, COX5A, COX5B, COX6A, COX6B, COX6C, COX7A, COX7B, COX7C, COX8 and NDUFA4, which are encoded in the nuclear genome. The complex exists as a monomer or a dimer and forms supercomplexes (SCs) in the inner mitochondrial membrane with NADH-ubiquinone oxidoreductase (complex I, CI) and ubiquinol-cytochrome c oxidoreductase (cytochrome b-c1 complex, complex III, CIII), resulting in different assemblies (supercomplex SCI(1)III(2)IV(1) and megacomplex MCI(2)III(2)IV(2)). Found in a complex with TMEM177, COA6, COX18, COX20, SCO1 and SCO2. Interacts with TMEM177 in a COX20-dependent manner. Interacts with COX20. Interacts with COX16. The cofactor is Cu cation.

The protein resides in the mitochondrion inner membrane. It carries out the reaction 4 Fe(II)-[cytochrome c] + O2 + 8 H(+)(in) = 4 Fe(III)-[cytochrome c] + 2 H2O + 4 H(+)(out). Component of the cytochrome c oxidase, the last enzyme in the mitochondrial electron transport chain which drives oxidative phosphorylation. The respiratory chain contains 3 multisubunit complexes succinate dehydrogenase (complex II, CII), ubiquinol-cytochrome c oxidoreductase (cytochrome b-c1 complex, complex III, CIII) and cytochrome c oxidase (complex IV, CIV), that cooperate to transfer electrons derived from NADH and succinate to molecular oxygen, creating an electrochemical gradient over the inner membrane that drives transmembrane transport and the ATP synthase. Cytochrome c oxidase is the component of the respiratory chain that catalyzes the reduction of oxygen to water. Electrons originating from reduced cytochrome c in the intermembrane space (IMS) are transferred via the dinuclear copper A center (CU(A)) of subunit 2 and heme A of subunit 1 to the active site in subunit 1, a binuclear center (BNC) formed by heme A3 and copper B (CU(B)). The BNC reduces molecular oxygen to 2 water molecules using 4 electrons from cytochrome c in the IMS and 4 protons from the mitochondrial matrix. The sequence is that of Cytochrome c oxidase subunit 2 (MT-CO2) from Oenomys hypoxanthus (Rufous-nosed rat).